The primary structure comprises 766 residues: Signal transducer and activator of transcription 3.2 (766 aa).

The Essential for nuclear import motif lies at 150 to 162 (DVRKKVQDLEQKM). An SH2 domain is found at 580–670 (WNEGYIIGFI…DATNILVSPL (91 aa)). Ser725 carries the post-translational modification Phosphoserine; by NLK.

Belongs to the transcription factor STAT family. Forms a homodimer or a heterodimer with a related family member. Interacts with nlk.2. In terms of processing, phosphorylation of both tyrosine and serine residues, together with dimerization, is required for mesoderm induction.

It is found in the cytoplasm. The protein localises to the nucleus. Functionally, transcription factor that binds to target promoter sequences and activates transcription upon il6st/gp130 stimulation. Mediates ventralization of embryos, at least in part via inhibition of smad2 signaling. Required for hairy2 to induce dll1/delta1 and promote neural crest cell proliferation and differentiation. Involved in TGFbeta-mediated mesoderm induction in early embryos, acting downstream of map3k7/tak1 and nlk.2. The sequence is that of Signal transducer and activator of transcription 3.2 (stat3.2) from Xenopus laevis (African clawed frog).